The sequence spans 304 residues: MKLLLFGYGNVGKAFRKLLHEKRSPELNDVIIGGIVTRRGIMLQDKEDFTPDLEGDVFKAFEKIKPDIIVDVSSANYNNGEPSLSLYKEAIKDGVNIITTNKAPLALAFNEIFSLARSKGVKIGFQGTVMSGTPSINLYRVLPGSRVIKIRGILNGTTNFILTLMNKGVSFEEALKEAQRRGYAEEDPTLDINGFDAAAKITILANFMIGNSVTIKDVKFEGINRDLPKNEKIKLIAYADEKEVWVKPLPISQDDPLYNVDGVENALEITTDIQSILIRGPGAGPVNAAYGALSDLILLKRDCL.

NADP(+) is bound by residues tyrosine 8, asparagine 10, valine 11, arginine 38, arginine 39, and serine 73. An NADPH-binding site is contributed by tyrosine 8. 2 residues coordinate NADPH: valine 11 and arginine 38. Residue valine 11 coordinates NAD(+). NADPH contacts are provided by serine 73, serine 74, threonine 100, and lysine 102. An NAD(+)-binding site is contributed by serine 73. Threonine 100 and lysine 102 together coordinate NADP(+). Valine 129 and threonine 133 together coordinate Na(+). NADP(+) is bound by residues glycine 182 and glutamate 185. Residues glutamate 185 and aspartate 196 each coordinate L-homoserine. Lysine 200 acts as the Proton donor in catalysis. Glycine 284 is an NADP(+) binding site. An NADPH-binding site is contributed by glycine 284. Glycine 284 provides a ligand contact to NAD(+).

Belongs to the homoserine dehydrogenase family. In terms of assembly, homodimer. Requires a metal cation as cofactor. In terms of processing, the enzyme is activated by reductive cleavage of the interchain disulfide bond between the two subunits.

It catalyses the reaction L-homoserine + NADP(+) = L-aspartate 4-semialdehyde + NADPH + H(+). The enzyme catalyses L-homoserine + NAD(+) = L-aspartate 4-semialdehyde + NADH + H(+). Its pathway is amino-acid biosynthesis; L-methionine biosynthesis via de novo pathway; L-homoserine from L-aspartate: step 3/3. It participates in amino-acid biosynthesis; L-threonine biosynthesis; L-threonine from L-aspartate: step 3/5. Inhibited by cysteine. Catalyzes the conversion of L-aspartate-beta-semialdehyde (L-Asa) to L-homoserine (L-Hse), the third step in the biosynthesis of threonine and methionine from aspartate. This Sulfurisphaera tokodaii (strain DSM 16993 / JCM 10545 / NBRC 100140 / 7) (Sulfolobus tokodaii) protein is Homoserine dehydrogenase.